A 1002-amino-acid polypeptide reads, in one-letter code: UPF0182 protein alr1037 (1002 aa).

9 helical membrane-spanning segments follow: residues Phe-7 to Glu-29, Arg-49 to Ala-71, Leu-123 to Gly-145, Gln-178 to Ser-200, Phe-202 to Ala-224, Leu-258 to Leu-280, His-300 to Ser-319, Val-339 to Leu-361, and Gly-382 to Val-404.

Belongs to the UPF0182 family.

Its subcellular location is the cell membrane. This Nostoc sp. (strain PCC 7120 / SAG 25.82 / UTEX 2576) protein is UPF0182 protein alr1037.